Consider the following 218-residue polypeptide: Ras-related protein RABA1i (218 aa).

20 to 27 is a binding site for GTP; sequence GDSGVGKS. The Effector region motif lies at 42-50; sequence SRATIGVEF. GTP contacts are provided by residues 68-72, 126-129, and 156-157; these read DTAGQ, NKAD, and SA. Residues cysteine 215 and cysteine 216 are each lipidated (S-geranylgeranyl cysteine).

It belongs to the small GTPase superfamily. Rab family.

The protein resides in the cell membrane. Functionally, intracellular vesicle trafficking and protein transport. The protein is Ras-related protein RABA1i (RABA1I) of Arabidopsis thaliana (Mouse-ear cress).